We begin with the raw amino-acid sequence, 45 residues long: Photosystem II reaction center protein K (45 aa).

Residues 1 to 8 (MELMLLFA) constitute a propeptide that is removed on maturation. The chain crosses the membrane as a helical span at residues 24–44 (LPVIPVLFLALAFVWQASVGF).

The protein belongs to the PsbK family. PSII is composed of 1 copy each of membrane proteins PsbA, PsbB, PsbC, PsbD, PsbE, PsbF, PsbH, PsbI, PsbJ, PsbK, PsbL, PsbM, PsbT, PsbX, PsbY, PsbZ, Psb30/Ycf12, peripheral proteins PsbO, CyanoQ (PsbQ), PsbU, PsbV and a large number of cofactors. It forms dimeric complexes.

It localises to the cellular thylakoid membrane. In terms of biological role, one of the components of the core complex of photosystem II (PSII). PSII is a light-driven water:plastoquinone oxidoreductase that uses light energy to abstract electrons from H(2)O, generating O(2) and a proton gradient subsequently used for ATP formation. It consists of a core antenna complex that captures photons, and an electron transfer chain that converts photonic excitation into a charge separation. In Cyanothece sp. (strain PCC 7425 / ATCC 29141), this protein is Photosystem II reaction center protein K.